A 90-amino-acid chain; its full sequence is Probable small nuclear ribonucleoprotein E (90 aa).

In terms of domain architecture, Sm spans 14–89 (VNLIFRYLQN…ITLIHAAAQE (76 aa)).

Belongs to the snRNP Sm proteins family. As to quaternary structure, core component of the spliceosomal U1, U2, U4 and U5 small nuclear ribonucleoproteins (snRNPs), the building blocks of the spliceosome.

The protein localises to the nucleus. Its subcellular location is the cytoplasm. The protein resides in the cytosol. Its function is as follows. Plays a role in pre-mRNA splicing as a core component of the spliceosomal U1, U2, U4 and U5 small nuclear ribonucleoproteins (snRNPs), the building blocks of the spliceosome. The protein is Probable small nuclear ribonucleoprotein E (snr-6) of Caenorhabditis briggsae.